Here is a 312-residue protein sequence, read N- to C-terminus: Light-independent protochlorophyllide reductase iron-sulfur ATP-binding protein (312 aa).

ATP is bound by residues 55–60 (GIGKST) and Lys-84. Mg(2+) is bound at residue Ser-59. [4Fe-4S] cluster is bound by residues Cys-140 and Cys-174. ATP is bound by residues 225–226 (NR) and 249–251 (PDL).

Belongs to the NifH/BchL/ChlL family. As to quaternary structure, homodimer. Protochlorophyllide reductase is composed of three subunits; BchL, BchN and BchB. The cofactor is [4Fe-4S] cluster.

It carries out the reaction chlorophyllide a + oxidized 2[4Fe-4S]-[ferredoxin] + 2 ADP + 2 phosphate = protochlorophyllide a + reduced 2[4Fe-4S]-[ferredoxin] + 2 ATP + 2 H2O. It functions in the pathway porphyrin-containing compound metabolism; bacteriochlorophyll biosynthesis (light-independent). Functionally, component of the dark-operative protochlorophyllide reductase (DPOR) that uses Mg-ATP and reduced ferredoxin to reduce ring D of protochlorophyllide (Pchlide) to form chlorophyllide a (Chlide). This reaction is light-independent. The L component serves as a unique electron donor to the NB-component of the complex, and binds Mg-ATP. The polypeptide is Light-independent protochlorophyllide reductase iron-sulfur ATP-binding protein (Rhodopseudomonas palustris (strain BisB18)).